Reading from the N-terminus, the 342-residue chain is S-adenosylmethionine:tRNA ribosyltransferase-isomerase (342 aa).

It belongs to the QueA family. In terms of assembly, monomer.

Its subcellular location is the cytoplasm. It carries out the reaction 7-aminomethyl-7-carbaguanosine(34) in tRNA + S-adenosyl-L-methionine = epoxyqueuosine(34) in tRNA + adenine + L-methionine + 2 H(+). Its pathway is tRNA modification; tRNA-queuosine biosynthesis. Transfers and isomerizes the ribose moiety from AdoMet to the 7-aminomethyl group of 7-deazaguanine (preQ1-tRNA) to give epoxyqueuosine (oQ-tRNA). The chain is S-adenosylmethionine:tRNA ribosyltransferase-isomerase from Campylobacter jejuni subsp. jejuni serotype O:6 (strain 81116 / NCTC 11828).